The chain runs to 163 residues: Single-stranded DNA-binding protein 2 (163 aa).

One can recognise an SSB domain in the interval 1 to 104; sequence MINNVVLVGR…VVADNFQMLE (104 aa). Residues 109 to 163 form a disordered region; the sequence is REGGSTGSFNGGFNNNTSSSNSYSAPAQQTPNFGRDDSPFGNSNPMDISDDDLPF. Low complexity predominate over residues 119-130; that stretch reads GGFNNNTSSSNS. The segment covering 131–140 has biased composition (polar residues); sequence YSAPAQQTPN. Positions 158–163 match the Important for interaction with partner proteins motif; that stretch reads DDDLPF.

As to quaternary structure, homotetramer.

In terms of biological role, plays an important role in DNA replication, recombination and repair. Binds to ssDNA and to an array of partner proteins to recruit them to their sites of action during DNA metabolism. This Streptococcus pyogenes serotype M18 (strain MGAS8232) protein is Single-stranded DNA-binding protein 2 (ssb2).